The chain runs to 389 residues: Sulfate adenylyltransferase (389 aa).

Belongs to the sulfate adenylyltransferase family.

The catalysed reaction is sulfate + ATP + H(+) = adenosine 5'-phosphosulfate + diphosphate. The protein operates within sulfur metabolism; hydrogen sulfide biosynthesis; sulfite from sulfate: step 1/3. In Deinococcus geothermalis (strain DSM 11300 / CIP 105573 / AG-3a), this protein is Sulfate adenylyltransferase.